The chain runs to 546 residues: Chaperonin GroEL (546 aa).

ATP-binding positions include 30–33, Lys-51, 87–91, Gly-415, and Asp-496; these read TLGP and DGTTT. Residues 526-546 form a disordered region; it reads PEPKSAPAGGMGGMGGMDGMM. Gly residues predominate over residues 534-546; it reads GGMGGMGGMDGMM.

This sequence belongs to the chaperonin (HSP60) family. Forms a cylinder of 14 subunits composed of two heptameric rings stacked back-to-back. Interacts with the co-chaperonin GroES.

The protein resides in the cytoplasm. It catalyses the reaction ATP + H2O + a folded polypeptide = ADP + phosphate + an unfolded polypeptide.. In terms of biological role, together with its co-chaperonin GroES, plays an essential role in assisting protein folding. The GroEL-GroES system forms a nano-cage that allows encapsulation of the non-native substrate proteins and provides a physical environment optimized to promote and accelerate protein folding. This chain is Chaperonin GroEL, found in Rhodopseudomonas palustris.